A 233-amino-acid chain; its full sequence is Methylthioribulose-1-phosphate dehydratase (233 aa).

Cys-91 contributes to the substrate binding site. 2 residues coordinate Zn(2+): His-108 and His-110. Glu-137 (proton donor/acceptor) is an active-site residue. Zn(2+) is bound at residue His-194.

The protein belongs to the aldolase class II family. MtnB subfamily. Zn(2+) serves as cofactor.

The protein localises to the cytoplasm. The catalysed reaction is 5-(methylsulfanyl)-D-ribulose 1-phosphate = 5-methylsulfanyl-2,3-dioxopentyl phosphate + H2O. It participates in amino-acid biosynthesis; L-methionine biosynthesis via salvage pathway; L-methionine from S-methyl-5-thio-alpha-D-ribose 1-phosphate: step 2/6. Its function is as follows. Catalyzes the dehydration of methylthioribulose-1-phosphate (MTRu-1-P) into 2,3-diketo-5-methylthiopentyl-1-phosphate (DK-MTP-1-P). This Phaeosphaeria nodorum (strain SN15 / ATCC MYA-4574 / FGSC 10173) (Glume blotch fungus) protein is Methylthioribulose-1-phosphate dehydratase.